A 368-amino-acid polypeptide reads, in one-letter code: S-adenosylmethionine decarboxylase proenzyme (368 aa).

Residues E26 and E29 contribute to the active site. S83 functions as the Schiff-base intermediate with substrate; via pyruvic acid in the catalytic mechanism. A Pyruvic acid (Ser); by autocatalysis modification is found at S83. C97 (proton donor; for catalytic activity) is an active-site residue. Catalysis depends on proton acceptor; for processing activity residues S246 and H261.

It belongs to the eukaryotic AdoMetDC family. As to quaternary structure, heterotetramer of two alpha and two beta chains. The cofactor is pyruvate. Post-translationally, is synthesized initially as an inactive proenzyme. Formation of the active enzyme involves a self-maturation process in which the active site pyruvoyl group is generated from an internal serine residue via an autocatalytic post-translational modification. Two non-identical subunits are generated from the proenzyme in this reaction, and the pyruvate is formed at the N-terminus of the alpha chain, which is derived from the carboxyl end of the proenzyme. The post-translation cleavage follows an unusual pathway, termed non-hydrolytic serinolysis, in which the side chain hydroxyl group of the serine supplies its oxygen atom to form the C-terminus of the beta chain, while the remainder of the serine residue undergoes an oxidative deamination to produce ammonia and the pyruvoyl group blocking the N-terminus of the alpha chain.

The enzyme catalyses S-adenosyl-L-methionine + H(+) = S-adenosyl 3-(methylsulfanyl)propylamine + CO2. It participates in amine and polyamine biosynthesis; S-adenosylmethioninamine biosynthesis; S-adenosylmethioninamine from S-adenosyl-L-methionine: step 1/1. Functionally, essential for biosynthesis of the polyamines spermidine and spermine. Polyamines are essential for cell proliferation and are implicated in cellular processes, ranging from DNA replication to apoptosis. The protein is S-adenosylmethionine decarboxylase proenzyme of Caenorhabditis elegans.